The sequence spans 269 residues: AA9 family lytic polysaccharide monooxygenase I (269 aa).

The N-terminal stretch at Met-1–Ala-17 is a signal peptide. Cu(2+) contacts are provided by His-18 and His-103. An intrachain disulfide couples Cys-73 to Cys-196. Asn-156 is a glycosylation site (N-linked (GlcNAc...) asparagine). The O2 site is built by His-182 and Gln-191. Tyr-193 serves as a coordination point for Cu(2+).

Belongs to the polysaccharide monooxygenase AA9 family. Cu(2+) is required as a cofactor.

The protein resides in the secreted. It catalyses the reaction [(1-&gt;4)-beta-D-glucosyl]n+m + reduced acceptor + O2 = 4-dehydro-beta-D-glucosyl-[(1-&gt;4)-beta-D-glucosyl]n-1 + [(1-&gt;4)-beta-D-glucosyl]m + acceptor + H2O.. Lytic polysaccharide monooxygenase (LPMO) that depolymerizes crystalline and amorphous polysaccharides via the oxidation of scissile alpha- or beta-(1-4)-glycosidic bonds, yielding C1 and C4 oxidation products. Catalysis by LPMOs requires the reduction of the active-site copper from Cu(II) to Cu(I) by a reducing agent and H(2)O(2) or O(2) as a cosubstrate. The sequence is that of AA9 family lytic polysaccharide monooxygenase I from Botryotinia fuckeliana (strain B05.10) (Noble rot fungus).